The sequence spans 337 residues: Anthranilate phosphoribosyltransferase (337 aa).

5-phospho-alpha-D-ribose 1-diphosphate contacts are provided by residues Gly-81, 84 to 85 (GD), Ser-89, 91 to 94 (NVST), 109 to 117 (KHGNRAASS), and Ala-121. Gly-81 is a binding site for anthranilate. Residue Ser-93 participates in Mg(2+) binding. Asn-112 is an anthranilate binding site. Arg-167 serves as a coordination point for anthranilate. Mg(2+)-binding residues include Asp-226 and Glu-227.

The protein belongs to the anthranilate phosphoribosyltransferase family. In terms of assembly, homodimer. Requires Mg(2+) as cofactor.

It carries out the reaction N-(5-phospho-beta-D-ribosyl)anthranilate + diphosphate = 5-phospho-alpha-D-ribose 1-diphosphate + anthranilate. It participates in amino-acid biosynthesis; L-tryptophan biosynthesis; L-tryptophan from chorismate: step 2/5. In terms of biological role, catalyzes the transfer of the phosphoribosyl group of 5-phosphorylribose-1-pyrophosphate (PRPP) to anthranilate to yield N-(5'-phosphoribosyl)-anthranilate (PRA). This Methylobacterium sp. (strain 4-46) protein is Anthranilate phosphoribosyltransferase.